Here is a 426-residue protein sequence, read N- to C-terminus: 4-hydroxy-3-methylbut-2-en-1-yl diphosphate synthase (flavodoxin) (426 aa).

4 residues coordinate [4Fe-4S] cluster: C310, C313, C356, and E363.

This sequence belongs to the IspG family. It depends on [4Fe-4S] cluster as a cofactor.

The enzyme catalyses (2E)-4-hydroxy-3-methylbut-2-enyl diphosphate + oxidized [flavodoxin] + H2O + 2 H(+) = 2-C-methyl-D-erythritol 2,4-cyclic diphosphate + reduced [flavodoxin]. The protein operates within isoprenoid biosynthesis; isopentenyl diphosphate biosynthesis via DXP pathway; isopentenyl diphosphate from 1-deoxy-D-xylulose 5-phosphate: step 5/6. Converts 2C-methyl-D-erythritol 2,4-cyclodiphosphate (ME-2,4cPP) into 1-hydroxy-2-methyl-2-(E)-butenyl 4-diphosphate. This Rhodopseudomonas palustris (strain BisA53) protein is 4-hydroxy-3-methylbut-2-en-1-yl diphosphate synthase (flavodoxin).